The primary structure comprises 298 residues: Syntaxin-4 (298 aa).

The Cytoplasmic segment spans residues 1–274; it reads MRDRTHELRQ…NQKKARKKKV (274 aa). Residues serine 15, serine 29, serine 35, serine 36, serine 117, serine 208, and serine 248 each carry the phosphoserine modification. A coiled-coil region spans residues 38 to 163; the sequence is DDEFFQKVQT…ERIRRQLKIT (126 aa). The interval 154-298 is interaction with CENPF; that stretch reads ERIRRQLKIT…VIIGITITVG (145 aa). The t-SNARE coiled-coil homology domain maps to 200-262; that stretch reads LNEISARHSE…ERGQEHVKIA (63 aa). A helical; Anchor for type IV membrane protein transmembrane segment spans residues 275–295; the sequence is MIAICVSVTVLILAVIIGITI. Topologically, residues 296–298 are extracellular; sequence TVG.

The protein belongs to the syntaxin family. In terms of assembly, found in a complex with VAMP8 and SNAP23. Detected in a complex with SNAP23 and STXBP4. Interacts with SNAP23 and SNAPIN. Interacts with VAMP2. Interacts with LLGL1. Interacts (via C-terminus) with CENPF. Interacts with DOC2B. Interacts with STXBP3; excludes interaction with DOC2B and SNAP25. Interacts with STXBP4; excludes interaction with VAMP2. Component of the SNARE complex composed of STX4, SNAP23 and VAMP7 that interacts with SYT7 during lysosomal exocytosis. Interacts with STXBP6. Interacts with STXBP5L. As to expression, expressed in all tissues tested including adipose, brain, testis, intestine, liver, heart, spleen, skeletal muscle and kidney.

The protein resides in the cell membrane. It localises to the cell projection. The protein localises to the neuron projection. It is found in the stereocilium. Its function is as follows. Plasma membrane t-SNARE that mediates docking of transport vesicles. Necessary for the translocation of SLC2A4 from intracellular vesicles to the plasma membrane. In neurons, recruited at neurite tips to membrane domains rich in the phospholipid 1-oleoyl-2-palmitoyl-PC (OPPC) which promotes neurite tip surface expression of the dopamine transporter SLC6A3/DAT by facilitating fusion of SLC6A3-containing transport vesicles with the plasma membrane. Together with STXB3 and VAMP2, may also play a role in docking/fusion of intracellular GLUT4-containing vesicles with the cell surface in adipocytes and in docking of synaptic vesicles at presynaptic active zones. Required for normal hearing. The chain is Syntaxin-4 (Stx4) from Rattus norvegicus (Rat).